The sequence spans 258 residues: 5'-nucleotidase SurE (258 aa).

Positions 13, 14, 44, and 92 each coordinate a divalent metal cation. Residues Ser237–Phe258 are disordered.

Belongs to the SurE nucleotidase family. A divalent metal cation is required as a cofactor.

Its subcellular location is the cytoplasm. The catalysed reaction is a ribonucleoside 5'-phosphate + H2O = a ribonucleoside + phosphate. In terms of biological role, nucleotidase that shows phosphatase activity on nucleoside 5'-monophosphates. This chain is 5'-nucleotidase SurE, found in Halobacterium salinarum (strain ATCC 29341 / DSM 671 / R1).